The sequence spans 348 residues: Holliday junction branch migration complex subunit RuvB (348 aa).

The segment at 1–183 is large ATPase domain (RuvB-L); sequence MTEASRIVAP…FGIPVRLNFY (183 aa). ATP-binding positions include Leu-22, Arg-23, Gly-64, Lys-67, Thr-68, Thr-69, 130 to 132, Arg-173, Tyr-183, and Arg-220; that span reads EDF. Residue Thr-68 coordinates Mg(2+). Residues 184–254 form a small ATPAse domain (RuvB-S) region; sequence TEDELEKIVS…VADHALGALE (71 aa). The head domain (RuvB-H) stretch occupies residues 257–348; it reads AAGLDAMDRR…SGLFGQDEDR (92 aa). 3 residues coordinate DNA: Arg-293, Arg-312, and Arg-317. The interval 329–348 is disordered; sequence LTEPSRDPAQSGLFGQDEDR.

The protein belongs to the RuvB family. In terms of assembly, homohexamer. Forms an RuvA(8)-RuvB(12)-Holliday junction (HJ) complex. HJ DNA is sandwiched between 2 RuvA tetramers; dsDNA enters through RuvA and exits via RuvB. An RuvB hexamer assembles on each DNA strand where it exits the tetramer. Each RuvB hexamer is contacted by two RuvA subunits (via domain III) on 2 adjacent RuvB subunits; this complex drives branch migration. In the full resolvosome a probable DNA-RuvA(4)-RuvB(12)-RuvC(2) complex forms which resolves the HJ.

It is found in the cytoplasm. The enzyme catalyses ATP + H2O = ADP + phosphate + H(+). Its function is as follows. The RuvA-RuvB-RuvC complex processes Holliday junction (HJ) DNA during genetic recombination and DNA repair, while the RuvA-RuvB complex plays an important role in the rescue of blocked DNA replication forks via replication fork reversal (RFR). RuvA specifically binds to HJ cruciform DNA, conferring on it an open structure. The RuvB hexamer acts as an ATP-dependent pump, pulling dsDNA into and through the RuvAB complex. RuvB forms 2 homohexamers on either side of HJ DNA bound by 1 or 2 RuvA tetramers; 4 subunits per hexamer contact DNA at a time. Coordinated motions by a converter formed by DNA-disengaged RuvB subunits stimulates ATP hydrolysis and nucleotide exchange. Immobilization of the converter enables RuvB to convert the ATP-contained energy into a lever motion, pulling 2 nucleotides of DNA out of the RuvA tetramer per ATP hydrolyzed, thus driving DNA branch migration. The RuvB motors rotate together with the DNA substrate, which together with the progressing nucleotide cycle form the mechanistic basis for DNA recombination by continuous HJ branch migration. Branch migration allows RuvC to scan DNA until it finds its consensus sequence, where it cleaves and resolves cruciform DNA. The chain is Holliday junction branch migration complex subunit RuvB from Nitrobacter winogradskyi (strain ATCC 25391 / DSM 10237 / CIP 104748 / NCIMB 11846 / Nb-255).